A 501-amino-acid chain; its full sequence is Tegument protein US24 (501 aa).

It belongs to the herpesviridae US22 family.

Its subcellular location is the virion tegument. This Human cytomegalovirus (strain Merlin) (HHV-5) protein is Tegument protein US24 (US24).